Here is a 520-residue protein sequence, read N- to C-terminus: Probable glycerol-3-phosphate acyltransferase 3 (520 aa).

5 helical membrane passes run 5–20, 64–84, 88–108, 264–284, and 286–306; these read ISIFQALVFLFYRFIL, YFMLVAFEAGGVIRSFLLFIL, ISLMSHEMGVKVMVMVSFFGI, TLMNTLVLFMWGPFAAAAAAA, and LFVSLCIPYSLSIPILAFSGC. The short motif at 334–339 is the HXXXXD motif element; sequence HRTLLD.

The protein belongs to the GPAT/DAPAT family. Widely expressed at low level. Expressed at higher level in seedlings and leaves.

It localises to the membrane. It carries out the reaction sn-glycerol 3-phosphate + an acyl-CoA = a 1-acyl-sn-glycero-3-phosphate + CoA. It participates in phospholipid metabolism; CDP-diacylglycerol biosynthesis; CDP-diacylglycerol from sn-glycerol 3-phosphate: step 1/3. Functionally, esterifies acyl-group from acyl-ACP to the sn-1 position of glycerol-3-phosphate, an essential step in glycerolipid biosynthesis. The polypeptide is Probable glycerol-3-phosphate acyltransferase 3 (GPAT3) (Arabidopsis thaliana (Mouse-ear cress)).